The primary structure comprises 556 residues: Zinc finger protein 18 (556 aa).

Residues Arg-41–Pro-123 form the SCAN box domain. The interval Gln-169–Glu-195 is disordered. Residues Glu-218–Arg-291 enclose the KRAB domain. C2H2-type zinc fingers lie at residues Pro-415–His-437, Phe-443–His-465, Cys-471–His-493, Tyr-499–His-521, and Tyr-527–His-549.

Belongs to the krueppel C2H2-type zinc-finger protein family.

It localises to the nucleus. Its function is as follows. May be involved in transcriptional regulation. The chain is Zinc finger protein 18 (Znf18) from Mus musculus (Mouse).